The sequence spans 359 residues: GTP cyclohydrolase FolE2 (359 aa).

The protein belongs to the GTP cyclohydrolase IV family.

It catalyses the reaction GTP + H2O = 7,8-dihydroneopterin 3'-triphosphate + formate + H(+). The protein operates within cofactor biosynthesis; 7,8-dihydroneopterin triphosphate biosynthesis; 7,8-dihydroneopterin triphosphate from GTP: step 1/1. Its function is as follows. Converts GTP to 7,8-dihydroneopterin triphosphate. This chain is GTP cyclohydrolase FolE2, found in Cereibacter sphaeroides (strain ATCC 17029 / ATH 2.4.9) (Rhodobacter sphaeroides).